The following is a 272-amino-acid chain: Shikimate dehydrogenase (NADP(+)) (272 aa).

Shikimate is bound by residues 14–16 (SKS) and Thr61. Residue Lys65 is the Proton acceptor of the active site. Glu77 contributes to the NADP(+) binding site. Shikimate is bound by residues Asn86 and Asp102. NADP(+)-binding positions include 126–130 (GAGGA), 149–154 (NRTASR), and Met213. Tyr215 provides a ligand contact to shikimate. Residue Gly237 participates in NADP(+) binding.

It belongs to the shikimate dehydrogenase family. Homodimer.

The enzyme catalyses shikimate + NADP(+) = 3-dehydroshikimate + NADPH + H(+). It participates in metabolic intermediate biosynthesis; chorismate biosynthesis; chorismate from D-erythrose 4-phosphate and phosphoenolpyruvate: step 4/7. In terms of biological role, involved in the biosynthesis of the chorismate, which leads to the biosynthesis of aromatic amino acids. Catalyzes the reversible NADPH linked reduction of 3-dehydroshikimate (DHSA) to yield shikimate (SA). This chain is Shikimate dehydrogenase (NADP(+)), found in Citrobacter koseri (strain ATCC BAA-895 / CDC 4225-83 / SGSC4696).